We begin with the raw amino-acid sequence, 867 residues long: Prominin-1 (867 aa).

Positions 1 to 19 are cleaved as a signal peptide; that stretch reads MALVFSALLLLGLCGKISS. Over 20 to 107 the chain is Extracellular; sequence EGQPAFHNTP…VLALKIALYE (88 aa). The chain crosses the membrane as a helical span at residues 108-128; that stretch reads IGVLICAILGLLFIILMPLVG. Topologically, residues 129–158 are cytoplasmic; the sequence is CFFCMCRCCNKCGGEMHQRQKQNAPCRRKC. A helical membrane pass occupies residues 159 to 179; it reads LGLSLLVICLLMSLGIIYGFV. The Extracellular portion of the chain corresponds to 180–434; the sequence is ANQQTRTRIK…LPKLEEYDSY (255 aa). N6-acetyllysine occurs at positions 226, 258, and 265. 5 N-linked (GlcNAc...) asparagine glycosylation sites follow: asparagine 273, asparagine 291, asparagine 332, asparagine 374, and asparagine 415. The chain crosses the membrane as a helical span at residues 435–455; it reads WWLGGLIVCFLLTLIVTFFFL. The Cytoplasmic portion of the chain corresponds to 456 to 487; sequence GLLCGVFGYDKHATPTRRGCVSNTGGIFLMAG. Residues 488–508 traverse the membrane as a helical segment; the sequence is VGFGFLFCWILMILVVLTFVV. Residues 509 to 794 are Extracellular-facing; that stretch reads GANVEKLLCE…LCGYVADPLN (286 aa). Asparagine 554, asparagine 581, and asparagine 732 each carry an N-linked (GlcNAc...) asparagine glycan. A helical transmembrane segment spans residues 795–815; it reads LFWFGIGKATVLLLPAVIIAI. The Cytoplasmic portion of the chain corresponds to 816-867; it reads KLAKYYRRMDSEDVYDDVETVPMKNLEIGSNGYHKDHLYGVHNPVMTSPSRY. Serine 865 is subject to Phosphoserine.

Belongs to the prominin family. In terms of assembly, interacts with CDHR1 and with actin filaments. Interacts with NAT8 and NAT8B. Acetylation at Lys-226, Lys-258 and Lys-265 by NAT8 and NAT8B may control PROM1 protein expression and its function in cell apoptosis. In the submandibular gland, expressed on the apical side of epithelial cells. In the parotid gland, expressed in the intercalated ducts. In the sublingual gland, expressed in intercalated ducts. In the extraorbital lacrimal gland, expressed in the intercalated tubules and larger intralobular ducts. Expressed in the retina. Present in urine within small membrane particles (at protein level). In the embryo, expressed on the apical side of neuroepithelial cells and of other epithelia such as lung buds, gut and ureter buds. In the adult, expressed at the apical side of the kidney tubules and of the ependymal layer of the brain. Not expressed in gut, liver, lung, pituitary, adrenal, heart or spleen. Localized to the nascent disk membranes at the base of the rod outer segment in the retina (at protein level).

It is found in the apical cell membrane. The protein localises to the cell projection. The protein resides in the microvillus membrane. Its subcellular location is the cilium. It localises to the photoreceptor outer segment. It is found in the endoplasmic reticulum. The protein localises to the endoplasmic reticulum-Golgi intermediate compartment. Its function is as follows. May play a role in cell differentiation, proliferation and apoptosis. Binds cholesterol in cholesterol-containing plasma membrane microdomains and may play a role in the organization of the apical plasma membrane in epithelial cells. During early retinal development acts as a key regulator of disk morphogenesis. Involved in regulation of MAPK and Akt signaling pathways. In neuroblastoma cells suppresses cell differentiation such as neurite outgrowth in a RET-dependent manner. The polypeptide is Prominin-1 (Prom1) (Mus musculus (Mouse)).